Reading from the N-terminus, the 861-residue chain is DNA mismatch repair protein MutS (861 aa).

Residue 618–625 coordinates ATP; it reads GPNMGGKS.

The protein belongs to the DNA mismatch repair MutS family.

Its function is as follows. This protein is involved in the repair of mismatches in DNA. It is possible that it carries out the mismatch recognition step. This protein has a weak ATPase activity. In Shewanella sp. (strain MR-4), this protein is DNA mismatch repair protein MutS.